Consider the following 81-residue polypeptide: MDISRAEQRILHHLAQGGRIEITREGKTITEIRCFTRDGWVYPGVDLELFRKLKRKRAIRSSAGKPYRITERGVRSELNNR.

Belongs to the UPF0386 family.

The protein is UPF0386 protein Smed_0945 of Sinorhizobium medicae (strain WSM419) (Ensifer medicae).